Consider the following 367-residue polypeptide: MADTTSKEVPLHSVQVEALVVMKIVKACAATYPTTATGSIVGMDSNGTLQITNSFPFPTADVAASDSHPNDHMAASNIAAAAPRSKANIVYQSEMIKMLKEVNVDANNVGWYTSANMGNFINTSLIENQFFYQKEPNERTVALVHDVSRSAQGALSLRAFRLSPNFMTAYKEGKFTTENMQKSKLTYKDILVELPIIVHNSHLLTSFLHQMPVELPKKELDFPASLADLTRNTPPTPLYPNLESLDLSIDPYLERTCDMLLDSIETHYTELNNFQYFQRQLTREQAKVTAWKTKRAAENASRATQKLAPLPEDEWERLFKLPTEPSRLEGMLNARQVDQYSRQVDGFTASITGKMFAVKSNLLPEQS.

Residues 14–166 (VQVEALVVMK…LRAFRLSPNF (153 aa)) form the MPN domain.

Belongs to the eIF-3 subunit H family. Component of the eukaryotic translation initiation factor 3 (eIF-3) complex.

Its subcellular location is the cytoplasm. In terms of biological role, component of the eukaryotic translation initiation factor 3 (eIF-3) complex, which is involved in protein synthesis of a specialized repertoire of mRNAs and, together with other initiation factors, stimulates binding of mRNA and methionyl-tRNAi to the 40S ribosome. The eIF-3 complex specifically targets and initiates translation of a subset of mRNAs involved in cell proliferation. The polypeptide is Eukaryotic translation initiation factor 3 subunit H (Sclerotinia sclerotiorum (strain ATCC 18683 / 1980 / Ss-1) (White mold)).